The following is a 491-amino-acid chain: 2,3-bisphosphoglycerate-independent phosphoglycerate mutase (491 aa).

Mn(2+)-binding residues include Asp-11 and Ser-61. Catalysis depends on Ser-61, which acts as the Phosphoserine intermediate. Substrate is bound by residues His-118, 147–148, Arg-177, Arg-183, 248–251, and Lys-320; these read RD and RSDR. Positions 386, 390, 427, 428, and 445 each coordinate Mn(2+).

Belongs to the BPG-independent phosphoglycerate mutase family. As to quaternary structure, monomer. It depends on Mn(2+) as a cofactor.

It carries out the reaction (2R)-2-phosphoglycerate = (2R)-3-phosphoglycerate. It functions in the pathway carbohydrate degradation; glycolysis; pyruvate from D-glyceraldehyde 3-phosphate: step 3/5. Functionally, catalyzes the interconversion of 2-phosphoglycerate and 3-phosphoglycerate. The sequence is that of 2,3-bisphosphoglycerate-independent phosphoglycerate mutase from Sulfurimonas denitrificans (strain ATCC 33889 / DSM 1251) (Thiomicrospira denitrificans (strain ATCC 33889 / DSM 1251)).